Reading from the N-terminus, the 402-residue chain is Putative epoxide hydrolase AFT8 (402 aa).

This sequence belongs to the peptidase S33 family.

It functions in the pathway mycotoxin biosynthesis. In terms of biological role, putative epoxide hydrolase; part of the gene clusters that mediate the biosynthesis of the host-selective toxins (HSTs) AF-toxins responsible for Alternaria black spot of strawberry disease by the strawberry pathotype. AF-toxin I and III are valine derivatives of 2,3-dyhydroxy-isovaleric acid and 2-hydroxy-isovaleric acid respectively, while AF II is an isoleucine derivative of 2-hydroxy-valeric acid. These derivatives are bound to a 9,10-epoxy-8-hydroxy-9-methyl-decatrienoic acid (EDA) moiety. On cellular level, AF-toxins affect plasma membrane of susceptible cells and cause a sudden increase in loss of K(+) after a few minutes of toxin treatment. The aldo-keto reductase AFTS1 catalyzes the conversion of 2-keto-isovaleric acid (2-KIV) to 2-hydroxy-isovaleric acid (2-HIV) by reduction of its ketone to an alcohol. The acyl-CoA ligase AFT1, the hydrolase AFT2 and the enoyl-CoA hydratases AFT3 and AFT6, but also the polyketide synthase AFT9, the acyl-CoA dehydrogenase AFT10, the cytochrome P450 monooxygenase AFT11 and the oxidoreductase AFT12 are all involved in the biosynthesis of the AK-, AF- and ACT-toxin common EDA structural moiety. The exact function of each enzyme, and of additional enzymes identified within the AF-toxin clusters have still to be determined. The polypeptide is Putative epoxide hydrolase AFT8 (Alternaria alternata (Alternaria rot fungus)).